Consider the following 209-residue polypeptide: Mitochondrial import inner membrane translocase subunit Tim23 (209 aa).

A run of 3 helical transmembrane segments spans residues 73–93 (FELAFFTIGGCCMTGAAFGAL), 125–145 (ALWANTLGSLALLYSAFGVII), and 181–197 (GLAGLTLTSVYALYNNW).

Belongs to the Tim17/Tim22/Tim23 family. In terms of assembly, component of the TIM23 complex at least composed of TIMM23, TIMM17 (TIMM17A or TIMM17B) and TIMM50; within this complex, directly interacts with TIMM50. The complex interacts with the TIMM44 component of the PAM complex and with DNAJC15. Upon mitochondrial depolarization, interacts with PINK1; the interaction is required for PINK1 accumulation at the outer mitochondrial membrane, kinase activation by autophosphorylation and PRKN recruitement to mitochondria.

The protein resides in the mitochondrion inner membrane. In terms of biological role, essential component of the TIM23 complex, a complex that mediates the translocation of transit peptide-containing proteins across the mitochondrial inner membrane. Has a role in the activation of stress-induced mitophagy by protecting PINK1 from OMA1-mediated degradation and facilitating its accumulation at the outer mitochondrial membrane in response to depolarization. This Rattus norvegicus (Rat) protein is Mitochondrial import inner membrane translocase subunit Tim23 (Timm23).